The primary structure comprises 410 residues: Chitin deacetylase 3 (410 aa).

Positions 1-18 (MYGHLSLSTLSLLAVVAA) are cleaved as a signal peptide. Residues 19–39 (APFPESWLQPRDSDVSQLFRR) constitute a propeptide that is removed on maturation. N-linked (GlcNAc...) asparagine glycans are attached at residues N61 and N80. The region spanning 124 to 314 (KVWALSFDDG…KAVANGWSVK (191 aa)) is the NodB homology domain. The Proton acceptor role is filled by D131. D131 is a binding site for acetate. D132 is a Co(2+) binding site. N-linked (GlcNAc...) asparagine glycosylation is present at N149. Co(2+) contacts are provided by H183 and H187. Y225 is an acetate binding site. N-linked (GlcNAc...) asparagine glycosylation occurs at N279. The active-site Proton donor is the H289. N293 carries N-linked (GlcNAc...) asparagine glycosylation. Residue S385 is the site of GPI-anchor amidated serine attachment. The propeptide at 386–410 (SSWPIANRPSLFVIACGLALAAIMV) is removed in mature form.

This sequence belongs to the polysaccharide deacetylase family. The cofactor is Co(2+).

Its subcellular location is the cell membrane. The catalysed reaction is [(1-&gt;4)-N-acetyl-beta-D-glucosaminyl](n) + n H2O = chitosan + n acetate. Hydrolyzes the N-acetamido groups of N-acetyl-D-glucosamine residues in chitin to form chitosan and acetate. Chitosan is required to anchor melanin to the cell wall, for maintenance of cell wall integrity, and for proper cytokinesis. Chitosan offers an advantage during infection as it is less readily detected than chitin by host immunosurveillance mechanisms. In Cryptococcus neoformans var. neoformans serotype D (strain JEC21 / ATCC MYA-565) (Filobasidiella neoformans), this protein is Chitin deacetylase 3.